The sequence spans 210 residues: Helix-loop-helix protein 26 (210 aa).

Residues 1–15 (MSSSPTSSSSGSPSS) show a composition bias toward low complexity. Residues 1–33 (MSSSPTSSSSGSPSSHGHRSETEKQRRDDTNDL) are disordered. Residues 14–65 (SSHGHRSETEKQRRDDTNDLLNEFKKIVQKSESEKLSKEEVLFRIVKLLSGI) enclose the bHLH domain. Residues 18-33 (HRSETEKQRRDDTNDL) show a composition bias toward basic and acidic residues.

As to quaternary structure, homodimer; binds to DNA as a homodimer. In terms of tissue distribution, expressed in intestinal cells (at protein level).

The protein localises to the nucleus. Functionally, as a homodimer binds DNA via the E-box sequence 5'-CACGTG-3'. Represses lag-2 transcription during embryogenesis via Notch signaling, in an unc-37-dependent manner. Also represses tbx-37 independent of Notch signaling. In the intestine, plays a role in probiotic-mediated protection against infections by pathogens such as S.enterica. This is most likely by positively regulating the expression of genes such as bar-1 upon exposure to probiotic bacteria such as the E.faecium. In Caenorhabditis elegans, this protein is Helix-loop-helix protein 26.